We begin with the raw amino-acid sequence, 337 residues long: Inositol 2-dehydrogenase (337 aa).

It belongs to the Gfo/Idh/MocA family. As to quaternary structure, homotetramer.

It carries out the reaction myo-inositol + NAD(+) = scyllo-inosose + NADH + H(+). Its function is as follows. Involved in the oxidation of myo-inositol (MI) to 2-keto-myo-inositol (2KMI or 2-inosose). In Klebsiella pneumoniae (strain 342), this protein is Inositol 2-dehydrogenase.